The primary structure comprises 552 residues: Glucose-6-phosphate isomerase (552 aa).

The Proton donor role is filled by glutamate 359. Residues histidine 390 and lysine 514 contribute to the active site.

The protein belongs to the GPI family.

The protein localises to the cytoplasm. The catalysed reaction is alpha-D-glucose 6-phosphate = beta-D-fructose 6-phosphate. It functions in the pathway carbohydrate biosynthesis; gluconeogenesis. It participates in carbohydrate degradation; glycolysis; D-glyceraldehyde 3-phosphate and glycerone phosphate from D-glucose: step 2/4. Its function is as follows. Catalyzes the reversible isomerization of glucose-6-phosphate to fructose-6-phosphate. The chain is Glucose-6-phosphate isomerase from Streptomyces griseus subsp. griseus (strain JCM 4626 / CBS 651.72 / NBRC 13350 / KCC S-0626 / ISP 5235).